The sequence spans 147 residues: Lysozyme C (147 aa).

Positions 1–18 (MKALVILGFLFLSVAVQG) are cleaved as a signal peptide. One can recognise a C-type lysozyme domain in the interval 19–147 (KVFERCELAR…VSSYVEGCTL (129 aa)). Disulfide bonds link Cys-24–Cys-145, Cys-48–Cys-133, Cys-83–Cys-99, and Cys-95–Cys-113. Catalysis depends on residues Glu-53 and Asp-71.

It belongs to the glycosyl hydrolase 22 family. As to quaternary structure, monomer. As to expression, stomach-specific.

It carries out the reaction Hydrolysis of (1-&gt;4)-beta-linkages between N-acetylmuramic acid and N-acetyl-D-glucosamine residues in a peptidoglycan and between N-acetyl-D-glucosamine residues in chitodextrins.. Its function is as follows. Lysozymes have primarily a bacteriolytic function; those in tissues and body fluids are associated with the monocyte-macrophage system and enhance the activity of immunoagents. In Bos taurus (Bovine), this protein is Lysozyme C (LYZ1).